The following is a 309-amino-acid chain: Protoheme IX farnesyltransferase (309 aa).

Transmembrane regions (helical) follow at residues 35–55 (IGIV…AFYF), 64–84 (LHLV…SCAI), 114–134 (VLWL…MTTV), 135–155 (TAAV…TLWT), 161–181 (INTV…WTAV), 187–207 (IVPL…FLAL), 231–251 (MTKR…FYLF), 253–273 (LGVP…LLGL), and 289–309 (FVYS…ATLW).

Belongs to the UbiA prenyltransferase family. Protoheme IX farnesyltransferase subfamily. Interacts with CtaA.

It localises to the cell membrane. The enzyme catalyses heme b + (2E,6E)-farnesyl diphosphate + H2O = Fe(II)-heme o + diphosphate. Its pathway is porphyrin-containing compound metabolism; heme O biosynthesis; heme O from protoheme: step 1/1. Functionally, converts heme B (protoheme IX) to heme O by substitution of the vinyl group on carbon 2 of heme B porphyrin ring with a hydroxyethyl farnesyl side group. This chain is Protoheme IX farnesyltransferase, found in Geobacillus kaustophilus (strain HTA426).